Consider the following 308-residue polypeptide: tRNA pseudouridine synthase B (308 aa).

Asp-51 acts as the Nucleophile in catalysis.

It belongs to the pseudouridine synthase TruB family. Type 1 subfamily.

It catalyses the reaction uridine(55) in tRNA = pseudouridine(55) in tRNA. In terms of biological role, responsible for synthesis of pseudouridine from uracil-55 in the psi GC loop of transfer RNAs. The protein is tRNA pseudouridine synthase B of Aromatoleum aromaticum (strain DSM 19018 / LMG 30748 / EbN1) (Azoarcus sp. (strain EbN1)).